Reading from the N-terminus, the 55-residue chain is Large ribosomal subunit protein bL33 (55 aa).

It belongs to the bacterial ribosomal protein bL33 family.

In Paramagnetospirillum magneticum (strain ATCC 700264 / AMB-1) (Magnetospirillum magneticum), this protein is Large ribosomal subunit protein bL33.